A 199-amino-acid polypeptide reads, in one-letter code: MQEHQLSRVTSGNKKKYQSFDDESRDEKRMKCDSTDKLESNSNSKNIYQKTHRVIANIRERQRTQALNQSFSTLRKIIPTLPSDKLSKIQTLRLAAMYIDFLRHVIRRGEINMDSSDETFFSAQERLSYAFSVWRMEGDFYSRDKTAHYFTEQELNLCEYNFHSSFGNRLFYKAGIEAVNSADSDDITCILNTFLEGRI.

The segment at 1–43 (MQEHQLSRVTSGNKKKYQSFDDESRDEKRMKCDSTDKLESNSN) is disordered. Basic and acidic residues predominate over residues 25–39 (RDEKRMKCDSTDKLE). Residues 51-102 (THRVIANIRERQRTQALNQSFSTLRKIIPTLPSDKLSKIQTLRLAAMYIDFL) form the bHLH domain.

Efficient DNA binding requires dimerization with another bHLH protein. Homodimer. As to expression, expression is seen at the point of medusa formation in the ectodermal and endodermal bud tissues, and in the entocodon which gives rise to all smooth and striated muscle cells. After the subumbrellar plate differentiates from the endoderm, strong expression is detected until the medusa detaches from the gonzoid. Expression is observed in the distal part of the medusa but diminishes in entocodon-derived muscles as the tissues differentiate, with expression disappearing completely after stage 8. In later stages expression is seen in the distal and proximal parts of the bud and depending on state of maturity, in the developing gonadal tissue.

It is found in the nucleus. Its function is as follows. Probable transcription factor, which may be responsible for the formation of myoepithelial cells in early muscle development in larva and the formation of non-muscle tissues in later bud stages and mesoderm-like structures in the medusa. This is Twist-related protein from Podocoryna carnea (Hydrozoan).